Reading from the N-terminus, the 177-residue chain is Ferritin, heavy subunit (177 aa).

The region spanning glutamine 7 to glycine 156 is the Ferritin-like diiron domain. Residues glutamate 24, glutamate 59, histidine 62, glutamate 104, and glutamine 138 each coordinate Fe cation.

Belongs to the ferritin family. In terms of assembly, oligomer of 24 subunits. There are at least two types of subunits. The functional molecule forms a roughly spherical shell with a diameter of 12 nm and contains a central cavity into which the insoluble mineral iron core is deposited. In terms of tissue distribution, liver, gonads, head kidney, heart and spleen.

The enzyme catalyses 4 Fe(2+) + O2 + 4 H(+) = 4 Fe(3+) + 2 H2O. Stores iron in a soluble, non-toxic, readily available form. Important for iron homeostasis. Has ferroxidase activity. Iron is taken up in the ferrous form and deposited as ferric hydroxides after oxidation. In Salmo salar (Atlantic salmon), this protein is Ferritin, heavy subunit.